Reading from the N-terminus, the 967-residue chain is Mediator of RNA polymerase II transcription subunit 14 (967 aa).

It belongs to the Mediator complex subunit 14 family. As to quaternary structure, component of the Mediator complex.

Its subcellular location is the nucleus. In terms of biological role, component of the Mediator complex, a coactivator involved in the regulated transcription of nearly all RNA polymerase II-dependent genes. Mediator functions as a bridge to convey information from gene-specific regulatory proteins to the basal RNA polymerase II transcription machinery. Mediator is recruited to promoters by direct interactions with regulatory proteins and serves as a scaffold for the assembly of a functional preinitiation complex with RNA polymerase II and the general transcription factors. The sequence is that of Mediator of RNA polymerase II transcription subunit 14 (RGR1) from Eremothecium gossypii (strain ATCC 10895 / CBS 109.51 / FGSC 9923 / NRRL Y-1056) (Yeast).